Here is a 323-residue protein sequence, read N- to C-terminus: tRNA U34 carboxymethyltransferase (323 aa).

Carboxy-S-adenosyl-L-methionine-binding positions include Lys-91, Trp-105, Lys-110, Gly-130, Asp-152–Thr-154, Ile-181–Glu-182, Met-196, Tyr-200, and Arg-315.

It belongs to the class I-like SAM-binding methyltransferase superfamily. CmoB family. In terms of assembly, homotetramer.

It carries out the reaction carboxy-S-adenosyl-L-methionine + 5-hydroxyuridine(34) in tRNA = 5-carboxymethoxyuridine(34) in tRNA + S-adenosyl-L-homocysteine + H(+). Its function is as follows. Catalyzes carboxymethyl transfer from carboxy-S-adenosyl-L-methionine (Cx-SAM) to 5-hydroxyuridine (ho5U) to form 5-carboxymethoxyuridine (cmo5U) at position 34 in tRNAs. This chain is tRNA U34 carboxymethyltransferase, found in Salmonella agona (strain SL483).